The following is a 1295-amino-acid chain: Phosphoribosylformylglycinamidine synthase (1295 aa).

The tract at residues 305-327 (WPGAATGSGGEIRDEGATGRGAK) is disordered. ATP-binding positions include 307–318 (GAATGSGGEIRD), 386–388 (TGY), and alanine 678. Mg(2+)-binding residues include aspartate 679, glutamate 718, asparagine 722, and aspartate 884. Residue serine 886 coordinates ATP. Positions 1042–1295 (VAVLREQGVN…IFRNARKQLG (254 aa)) constitute a Glutamine amidotransferase type-1 domain. The Nucleophile role is filled by cysteine 1135. Active-site residues include histidine 1260 and glutamate 1262.

It in the N-terminal section; belongs to the FGAMS family. As to quaternary structure, monomer.

It localises to the cytoplasm. It carries out the reaction N(2)-formyl-N(1)-(5-phospho-beta-D-ribosyl)glycinamide + L-glutamine + ATP + H2O = 2-formamido-N(1)-(5-O-phospho-beta-D-ribosyl)acetamidine + L-glutamate + ADP + phosphate + H(+). It participates in purine metabolism; IMP biosynthesis via de novo pathway; 5-amino-1-(5-phospho-D-ribosyl)imidazole from N(2)-formyl-N(1)-(5-phospho-D-ribosyl)glycinamide: step 1/2. Phosphoribosylformylglycinamidine synthase involved in the purines biosynthetic pathway. Catalyzes the ATP-dependent conversion of formylglycinamide ribonucleotide (FGAR) and glutamine to yield formylglycinamidine ribonucleotide (FGAM) and glutamate. The sequence is that of Phosphoribosylformylglycinamidine synthase from Salmonella typhimurium (strain LT2 / SGSC1412 / ATCC 700720).